The primary structure comprises 616 residues: MALLQISEPGLSAAPHQRRLAAGIDLGTTNSLVATVRSGQVETLPDHEGRHLLPSVVHYQQQGHTVGYAARDNAAQDTANTISSVKRMMGRSLADIQARYPHLPYRFKASVNGLPMIDTAAGLLNPVRVSADILKALAARASESLSGELDGVVITVPAYFDDAQRQGTKDAARLAGLHVLRLLNEPTAAAIAYGLDSGKEGVIAVYDLGGGTFDISILRLSRGVFEVLATGGDSALGGDDFDHLLADYIREQAGIADRSDNRVQRELLDAAIAAKIALSDADTVRVNVAGWQGEITREQFNDLISALVKRTLLACRRALKDAGVDPQDVLEVVMVGGSTRVPLVRERVGEFFGRTPLTAIDPDKVVAIGAAIQADILVGNKPDSEMLLLDVIPLSLGLETMGGLVEKVIPRNTTIPVARAQDFTTFKDGQTAMSIHVMQGERELVQDCRSLARFALRGIPPLPAGGAHIRVTFQVDADGLLSVTAMEKSTGVEASIQVKPSYGLTDGEIASMIKDSMSFAEQDVKARMLAEQKVEAARVLESLTGALTADAALLSAAERQCIDDAAAHLSAVAQGDDVDAIEQAIKNVDKQTQEFAARRMDQSVRRALKGHSVDEV.

It belongs to the heat shock protein 70 family.

Functionally, chaperone involved in the maturation of iron-sulfur cluster-containing proteins. Has a low intrinsic ATPase activity which is markedly stimulated by HscB. Involved in the maturation of IscU. The sequence is that of Chaperone protein HscA from Salmonella agona (strain SL483).